The chain runs to 307 residues: N-acetylglucosamine-1-phosphotransferase subunit gamma (307 aa).

Positions 1–24 (MAGRLAGFLMLLGLASQGPAPAYA) are cleaved as a signal peptide. The 103-residue stretch at 69-171 (GKCFSLVEST…TFETPLVCHP (103 aa)) folds into the MRH domain. Cysteines 71 and 84 form a disulfide. Residues Asn-88 and Asn-115 are each glycosylated (N-linked (GlcNAc...) asparagine). Disulfide bonds link Cys-129/Cys-157 and Cys-142/Cys-169. The region spanning 176–279 (VYPTLSEALQ…HTQPTETTHS (104 aa)) is the DMAP1-binding domain.

In terms of assembly, homodimer; disulfide-linked. Hexamer of two alpha (GNPTAB), two beta (GNPTAB) and two gamma (GNPTG) subunits; disulfide-linked. The alpha and/or the beta subunits of the enzyme constitute the catalytic subunits. Post-translationally, cys-245 mediates the formation of the interchain disulfide bond for formation of the homodimer. Cys-142, Cys-157 and Cys-169 are involved in intramolecular disulfide bonds formation. In terms of tissue distribution, widely expressed. Highly expressed in the liver, intestine, brain, thymus, testis and ovary.

It localises to the secreted. Its subcellular location is the golgi apparatus. Non-catalytic subunit of the N-acetylglucosamine-1-phosphotransferase complex, an enzyme that catalyzes the formation of mannose 6-phosphate (M6P) markers on high mannose type oligosaccharides in the Golgi apparatus. Binds and presents the high mannose glycans of the acceptor to the catalytic alpha and beta subunits (GNPTAB). Enhances the rate of N-acetylglucosamine-1-phosphate transfer to the oligosaccharides of acid hydrolase acceptors. The protein is N-acetylglucosamine-1-phosphotransferase subunit gamma (Gnptg) of Mus musculus (Mouse).